The sequence spans 279 residues: Membrane protein insertase YidC (279 aa).

The first 22 residues, 1 to 22, serve as a signal peptide directing secretion; that stretch reads MKHLKRNMALLSVAALSFILTA. Cys23 is lipidated: N-palmitoyl cysteine. Cys23 carries S-diacylglycerol cysteine lipidation. 5 consecutive transmembrane segments (helical) span residues 35 to 55, 59 to 79, 129 to 149, 170 to 190, and 210 to 230; these read IWDGVIVYNFSRFIIYLSKLF, YGWGIIVFTIIIRIIILPLMI, MAGCLPLIIQLPVMYALYAAV, PYFILPILAALFTFMSTWLSM, and PLVILITALNFPAAITLYWVV. The span at 253-268 shows a compositional bias: basic and acidic residues; it reads EEKIQTEKAKRKAIEK. The tract at residues 253 to 279 is disordered; sequence EEKIQTEKAKRKAIEKAKRRAMKSKRK. Residues 269-279 show a composition bias toward basic residues; the sequence is AKRRAMKSKRK.

This sequence belongs to the OXA1/ALB3/YidC family. Type 2 subfamily.

The protein localises to the cell membrane. In terms of biological role, required for the insertion and/or proper folding and/or complex formation of integral membrane proteins into the membrane. Involved in integration of membrane proteins that insert both dependently and independently of the Sec translocase complex, as well as at least some lipoproteins. This is Membrane protein insertase YidC from Pediococcus pentosaceus (strain ATCC 25745 / CCUG 21536 / LMG 10740 / 183-1w).